Reading from the N-terminus, the 176-residue chain is Lactoylglutathione lyase (176 aa).

Positions 23–167 constitute a VOC domain; that stretch reads VFNHTMLRVK…DGYWVEIVQA (145 aa). H26 is a binding site for Ni(2+). Residue R30 coordinates substrate. Position 92 (E92) interacts with Ni(2+). Positions 96, 114, and 118 each coordinate substrate. Residues H118 and E163 each contribute to the Ni(2+) site. The active-site Proton donor/acceptor is the E163.

The protein belongs to the glyoxalase I family. In terms of assembly, monomer. Requires Ni(2+) as cofactor. It depends on Zn(2+) as a cofactor.

It catalyses the reaction (R)-S-lactoylglutathione = methylglyoxal + glutathione. It participates in secondary metabolite metabolism; methylglyoxal degradation; (R)-lactate from methylglyoxal: step 1/2. Its function is as follows. Catalyzes the conversion of hemimercaptal, formed from methylglyoxal and glutathione, to S-lactoylglutathione. This chain is Lactoylglutathione lyase (gloA), found in Pseudomonas aeruginosa (strain ATCC 15692 / DSM 22644 / CIP 104116 / JCM 14847 / LMG 12228 / 1C / PRS 101 / PAO1).